Here is a 357-residue protein sequence, read N- to C-terminus: Peptide chain release factor 1 (357 aa).

Gln-236 carries the post-translational modification N5-methylglutamine.

This sequence belongs to the prokaryotic/mitochondrial release factor family. Post-translationally, methylated by PrmC. Methylation increases the termination efficiency of RF1.

The protein localises to the cytoplasm. In terms of biological role, peptide chain release factor 1 directs the termination of translation in response to the peptide chain termination codons UAG and UAA. This Mycolicibacterium vanbaalenii (strain DSM 7251 / JCM 13017 / BCRC 16820 / KCTC 9966 / NRRL B-24157 / PYR-1) (Mycobacterium vanbaalenii) protein is Peptide chain release factor 1.